The chain runs to 687 residues: uncharacterized protein (687 aa).

Helical transmembrane passes span 28–48 (IIFTALVFGVLVAATGQTIVV), 66–86 (WAVTSYLLGGTVVVVVAGKLG), 94–114 (VLLGSVVVFVVGSVLCGLSQT), 126–146 (GVGAGAISVTAYALAAEVVPL), 154–174 (GVLGAVFGVNTVTGPLLGGWL), 182–202 (WAFWINVPVSIAVLTVAATAV), 211–231 (PVIDYLGILVIAVATTALIMA), 243–263 (SATIVGLLIGAAVALGFFVWL), 287–307 (VLSFVVGFAMLGALTFVPIYL), 320–340 (LRTLPMVIGLLIASTGTGVLV), 348–368 (IFPVAGMALMAVAFLLMSQMD), 378–398 (LYLVVLGAGIGLSMQVLVLIV), 414–434 (VTFFRVVGASFGTATFGALFV), and 480–500 (LTQVFLCAVSVTVVGFILALL).

This sequence belongs to the major facilitator superfamily. TCR/Tet family.

The protein resides in the cell membrane. This is an uncharacterized protein from Mycobacterium tuberculosis (strain CDC 1551 / Oshkosh).